We begin with the raw amino-acid sequence, 475 residues long: Aspartyl/glutamyl-tRNA(Asn/Gln) amidotransferase subunit B (475 aa).

Belongs to the GatB/GatE family. GatB subfamily. In terms of assembly, heterotrimer of A, B and C subunits.

The catalysed reaction is L-glutamyl-tRNA(Gln) + L-glutamine + ATP + H2O = L-glutaminyl-tRNA(Gln) + L-glutamate + ADP + phosphate + H(+). It catalyses the reaction L-aspartyl-tRNA(Asn) + L-glutamine + ATP + H2O = L-asparaginyl-tRNA(Asn) + L-glutamate + ADP + phosphate + 2 H(+). In terms of biological role, allows the formation of correctly charged Asn-tRNA(Asn) or Gln-tRNA(Gln) through the transamidation of misacylated Asp-tRNA(Asn) or Glu-tRNA(Gln) in organisms which lack either or both of asparaginyl-tRNA or glutaminyl-tRNA synthetases. The reaction takes place in the presence of glutamine and ATP through an activated phospho-Asp-tRNA(Asn) or phospho-Glu-tRNA(Gln). The sequence is that of Aspartyl/glutamyl-tRNA(Asn/Gln) amidotransferase subunit B from Bacillus cereus (strain B4264).